The following is a 353-amino-acid chain: UPF0283 membrane protein YcjF (353 aa).

A compositionally biased stretch (basic and acidic residues) spans Met-1–Pro-19. A disordered region spans residues Met-1–Arg-35. 3 helical membrane-spanning segments follow: residues Met-70–Thr-90, Val-100–Val-120, and Glu-213–Trp-233.

It belongs to the UPF0283 family.

It localises to the cell inner membrane. The sequence is that of UPF0283 membrane protein YcjF from Salmonella paratyphi A (strain AKU_12601).